We begin with the raw amino-acid sequence, 1127 residues long: Major DNA-binding protein (1127 aa).

A required for nuclear localization region spans residues 1098 to 1127 (QVKLTSMDHSGKVVGGKKRKIATMFDDLDL).

It belongs to the herpesviridae major DNA-binding protein family. Homooligomers. Forms double-helical filaments necessary for the formation of replication compartments within the host nucleus. Interacts with the origin-binding protein. Interacts with the helicase primase complex; this interaction stimulates primer synthesis activity of the helicase-primase complex. Interacts with the DNA polymerase. Interacts with the alkaline exonuclease; this interaction increases its nuclease processivity.

The protein resides in the host nucleus. Plays several crucial roles in viral infection. Participates in the opening of the viral DNA origin to initiate replication by interacting with the origin-binding protein. May disrupt loops, hairpins and other secondary structures present on ssDNA to reduce and eliminate pausing of viral DNA polymerase at specific sites during elongation. Promotes viral DNA recombination by performing strand-transfer, characterized by the ability to transfer a DNA strand from a linear duplex to a complementary single-stranded DNA circle. Can also catalyze the renaturation of complementary single strands. Additionally, reorganizes the host cell nucleus, leading to the formation of prereplicative sites and replication compartments. This process is driven by the protein which can form double-helical filaments in the absence of DNA. The protein is Major DNA-binding protein of Alcelaphine herpesvirus 1 (strain C500) (AlHV-1).